The sequence spans 203 residues: LexA repressor (203 aa).

Positions 29–49 form a DNA-binding region, H-T-H motif; it reads VREIGQEVGLSSSSTVHGYLK. Catalysis depends on for autocatalytic cleavage activity residues serine 126 and lysine 163.

It belongs to the peptidase S24 family. Homodimer.

It carries out the reaction Hydrolysis of Ala-|-Gly bond in repressor LexA.. Represses a number of genes involved in the response to DNA damage (SOS response), including recA and lexA. In the presence of single-stranded DNA, RecA interacts with LexA causing an autocatalytic cleavage which disrupts the DNA-binding part of LexA, leading to derepression of the SOS regulon and eventually DNA repair. This is LexA repressor from Pelotomaculum thermopropionicum (strain DSM 13744 / JCM 10971 / SI).